A 435-amino-acid chain; its full sequence is Protein deadpan (435 aa).

Low complexity predominate over residues 18–27; sequence GYSDSYGSNG. Positions 18 to 48 are disordered; the sequence is GYSDSYGSNGRMSNPNGLSKAELRKTNKPIM. One can recognise a bHLH domain in the interval 40–97; the sequence is LRKTNKPIMEKRRRARINHCLNELKSLILEAMKKDPARHTKLEKADILEMTVKHLQSV. The region spanning 116–149 is the Orange domain; that stretch reads FKTGFVECAEEVNRYVSQMDGIDTGVRQRLSAHL. Disordered stretches follow at residues 305–334 and 349–416; these read QLPV…AASP and STPP…DEPS. Residues 311-324 show a composition bias toward low complexity; it reads STSPPLSPISSISS. 2 stretches are compositionally biased toward polar residues: residues 355–378 and 385–395; these read SAET…SSGC and LQQQQVSSTSG. Phosphoserine occurs at positions 407, 408, and 411. The WRPW motif signature appears at 432 to 435; that stretch reads WRPW.

In terms of assembly, homodimer. Heterodimer with E(spl)mgamma-HLH and E(spl). Transcription repression requires formation of a complex with the corepressor protein Groucho. Interacts (via bHLH motif) with sisA. Interacts with da.

The protein resides in the nucleus. Transcriptional repressor of genes that require a bHLH protein for their transcription. In the larval brain, required to maintain the self-renewal and identity of type II neuroblasts by regulating the expression of the transcriptional repressor erm together with other self-renewal transcriptional repressors such as klu and E(spl)mgamma-HLH. As part of its role in neuroblasts development, has been shown to be a direct target of the Notch signaling pathway, however might work also independently of N/Notch. In the developing larval and pupal brain, required for mushroom body differentiation. Involved in sex determination and SXL transcription repression when in complex with the corepressor protein Groucho. This chain is Protein deadpan (dpn), found in Drosophila melanogaster (Fruit fly).